Consider the following 343-residue polypeptide: SUMO-activating enzyme subunit aos-1 (343 aa).

This sequence belongs to the ubiquitin-activating E1 family. In terms of assembly, heterodimer of aos-1 and uba-2.

It participates in protein modification; protein sumoylation. Functionally, the dimeric enzyme acts as an E1 ligase for smo-1. It mediates ATP-dependent activation of smo-1 and formation of a thioester with a conserved cysteine residue on uba-2. The polypeptide is SUMO-activating enzyme subunit aos-1 (aos-1) (Caenorhabditis elegans).